The following is a 404-amino-acid chain: Acetate kinase (404 aa).

Residue asparagine 7 participates in Mg(2+) binding. Lysine 14 lines the ATP pocket. Residue arginine 98 coordinates substrate. The Proton donor/acceptor role is filled by aspartate 155. ATP-binding positions include histidine 214–glycine 218, aspartate 289–arginine 291, and glycine 337–asparagine 341. Position 390 (glutamate 390) interacts with Mg(2+).

This sequence belongs to the acetokinase family. Homodimer. It depends on Mg(2+) as a cofactor. Mn(2+) is required as a cofactor.

It is found in the cytoplasm. The catalysed reaction is acetate + ATP = acetyl phosphate + ADP. Its pathway is metabolic intermediate biosynthesis; acetyl-CoA biosynthesis; acetyl-CoA from acetate: step 1/2. Functionally, catalyzes the formation of acetyl phosphate from acetate and ATP. Can also catalyze the reverse reaction. The chain is Acetate kinase from Rippkaea orientalis (strain PCC 8801 / RF-1) (Cyanothece sp. (strain PCC 8801)).